The following is a 404-amino-acid chain: Phosphoglycerate kinase (404 aa).

Substrate is bound by residues Asp26–Asn28, Arg41, His64–Arg67, Arg124, and Arg161. ATP contacts are provided by residues Lys212, Gly301, Glu332, and Gly359–Ser362.

It belongs to the phosphoglycerate kinase family. In terms of assembly, monomer.

It is found in the cytoplasm. The enzyme catalyses (2R)-3-phosphoglycerate + ATP = (2R)-3-phospho-glyceroyl phosphate + ADP. The protein operates within carbohydrate degradation; glycolysis; pyruvate from D-glyceraldehyde 3-phosphate: step 2/5. The protein is Phosphoglycerate kinase of Mesomycoplasma hyopneumoniae (strain 232) (Mycoplasma hyopneumoniae).